The chain runs to 587 residues: Glutathione hydrolase proenzyme (587 aa).

An N-terminal signal peptide occupies residues Met1–Ala28. A propeptide spanning residues Lys29 to Tyr35 is cleaved from the precursor. Arg113 contacts L-glutamate. Thr403 functions as the Nucleophile in the catalytic mechanism. Residues Thr421, Glu423, Glu442, Asp445, Ser464–Ser465, and Gly485–Gly486 contribute to the L-glutamate site.

The protein belongs to the gamma-glutamyltransferase family. In terms of assembly, this enzyme consists of two polypeptide chains, which are synthesized in precursor form from a single polypeptide. In terms of processing, cleaved by autocatalysis into a large and small subunit.

The protein resides in the secreted. The catalysed reaction is an N-terminal (5-L-glutamyl)-[peptide] + an alpha-amino acid = 5-L-glutamyl amino acid + an N-terminal L-alpha-aminoacyl-[peptide]. It catalyses the reaction glutathione + H2O = L-cysteinylglycine + L-glutamate. It carries out the reaction an S-substituted glutathione + H2O = an S-substituted L-cysteinylglycine + L-glutamate. It participates in sulfur metabolism; glutathione metabolism. With respect to regulation, inhibited by glucose. In terms of biological role, cleaves the gamma-glutamyl bond of extracellular glutathione (gamma-Glu-Cys-Gly), glutathione conjugates, and other gamma-glutamyl compounds. The metabolism of glutathione releases free glutamate and the dipeptide cysteinyl-glycine, which is hydrolyzed to cysteine and glycine by dipeptidases. Uses glutamine as a gamma-glutamyl donor and acceptor for gamma-polyglutamic acid synthesis. Dipeptides are better gamma-glutamyl acceptors than free amino acids. This Bacillus subtilis subsp. natto protein is Glutathione hydrolase proenzyme (ggt).